The following is a 38-amino-acid chain: Large ribosomal subunit protein bL36 (38 aa).

Belongs to the bacterial ribosomal protein bL36 family.

The polypeptide is Large ribosomal subunit protein bL36 (Lactobacillus acidophilus (strain ATCC 700396 / NCK56 / N2 / NCFM)).